The sequence spans 283 residues: Shikimate dehydrogenase (NADP(+)) (283 aa).

Shikimate is bound by residues 19 to 21 (SFS) and Thr66. Lys70 functions as the Proton acceptor in the catalytic mechanism. Residue Glu82 participates in NADP(+) binding. The shikimate site is built by Asn91 and Asp106. NADP(+) is bound by residues 129 to 133 (GAGGA) and Ile225. Tyr227 contributes to the shikimate binding site. Gly248 contacts NADP(+).

It belongs to the shikimate dehydrogenase family. In terms of assembly, homodimer.

It carries out the reaction shikimate + NADP(+) = 3-dehydroshikimate + NADPH + H(+). Its pathway is metabolic intermediate biosynthesis; chorismate biosynthesis; chorismate from D-erythrose 4-phosphate and phosphoenolpyruvate: step 4/7. Its function is as follows. Involved in the biosynthesis of the chorismate, which leads to the biosynthesis of aromatic amino acids. Catalyzes the reversible NADPH linked reduction of 3-dehydroshikimate (DHSA) to yield shikimate (SA). The polypeptide is Shikimate dehydrogenase (NADP(+)) (Methanosphaera stadtmanae (strain ATCC 43021 / DSM 3091 / JCM 11832 / MCB-3)).